Reading from the N-terminus, the 510-residue chain is Probable cytochrome P450 4d20 (510 aa).

Position 455 (cysteine 455) interacts with heme.

Belongs to the cytochrome P450 family. Heme is required as a cofactor.

The protein localises to the endoplasmic reticulum membrane. It is found in the microsome membrane. Its function is as follows. May be involved in the metabolism of insect hormones and in the breakdown of synthetic insecticides. The polypeptide is Probable cytochrome P450 4d20 (Cyp4d20) (Drosophila melanogaster (Fruit fly)).